The sequence spans 476 residues: Aspartyl/glutamyl-tRNA(Asn/Gln) amidotransferase subunit B (476 aa).

This sequence belongs to the GatB/GatE family. GatB subfamily. As to quaternary structure, heterotrimer of A, B and C subunits.

The catalysed reaction is L-glutamyl-tRNA(Gln) + L-glutamine + ATP + H2O = L-glutaminyl-tRNA(Gln) + L-glutamate + ADP + phosphate + H(+). The enzyme catalyses L-aspartyl-tRNA(Asn) + L-glutamine + ATP + H2O = L-asparaginyl-tRNA(Asn) + L-glutamate + ADP + phosphate + 2 H(+). Its function is as follows. Allows the formation of correctly charged Asn-tRNA(Asn) or Gln-tRNA(Gln) through the transamidation of misacylated Asp-tRNA(Asn) or Glu-tRNA(Gln) in organisms which lack either or both of asparaginyl-tRNA or glutaminyl-tRNA synthetases. The reaction takes place in the presence of glutamine and ATP through an activated phospho-Asp-tRNA(Asn) or phospho-Glu-tRNA(Gln). This chain is Aspartyl/glutamyl-tRNA(Asn/Gln) amidotransferase subunit B, found in Enterococcus faecalis (strain ATCC 700802 / V583).